The primary structure comprises 214 residues: tRNA (guanine-N(7)-)-methyltransferase (214 aa).

4 residues coordinate S-adenosyl-L-methionine: Glu44, Glu69, Asp96, and Asp118. Asp118 is a catalytic residue. Residues Lys122, Asp154, and 191 to 194 (TEYE) each bind substrate.

Belongs to the class I-like SAM-binding methyltransferase superfamily. TrmB family.

It carries out the reaction guanosine(46) in tRNA + S-adenosyl-L-methionine = N(7)-methylguanosine(46) in tRNA + S-adenosyl-L-homocysteine. The protein operates within tRNA modification; N(7)-methylguanine-tRNA biosynthesis. In terms of biological role, catalyzes the formation of N(7)-methylguanine at position 46 (m7G46) in tRNA. The chain is tRNA (guanine-N(7)-)-methyltransferase from Listeria innocua serovar 6a (strain ATCC BAA-680 / CLIP 11262).